A 412-amino-acid polypeptide reads, in one-letter code: uncharacterized protein (412 aa).

An N-terminal signal peptide occupies residues 1-21; that stretch reads MIIPMLRILLIVLFVLNLVTS. Disordered stretches follow at residues 85 to 134, 250 to 294, and 327 to 357; these read QPPA…STTT, STTE…TPGT, and VELGEGDDDEENDDDSSEEEETKPPARHVRE. Residues 88–105 show a composition bias toward low complexity; the sequence is ASLTSLPAAPPSAQVAPP. Polar residues predominate over residues 124 to 134; that stretch reads TPQASISSTTT. 2 stretches are compositionally biased toward low complexity: residues 250–259 and 266–293; these read STTENTTEQS and TTSTYSTTTTAPVNTTSAPTTTHLGTPG. Residues 330 to 347 are compositionally biased toward acidic residues; sequence GEGDDDEENDDDSSEEEE. Over residues 348 to 357 the composition is skewed to basic and acidic residues; that stretch reads TKPPARHVRE. The region spanning 371-408 is the ShKT domain; it reads CDEEEDDKGKICKLWAAGGLCGTHKPTMFLFCRKTCLC.

This is an uncharacterized protein from Caenorhabditis elegans.